A 125-amino-acid polypeptide reads, in one-letter code: Protein ApaG (125 aa).

The ApaG domain maps to Thr3–Asn125.

This is Protein ApaG from Anaeromyxobacter dehalogenans (strain 2CP-C).